A 127-amino-acid chain; its full sequence is MATISRKKKKVKVTPEGAVHIKASFNNVLVTITDMQGNTVSWSSAGKNGFKGSKKNTPYASQVTSEAAAKEAFDLGMRYVHVFIKGPGSGRDAAIRALQGAGLDVKTIKDITPLPHNGCRPPKRRRV.

The protein belongs to the universal ribosomal protein uS11 family. In terms of assembly, part of the 30S ribosomal subunit. Interacts with proteins S7 and S18. Binds to IF-3.

Functionally, located on the platform of the 30S subunit, it bridges several disparate RNA helices of the 16S rRNA. Forms part of the Shine-Dalgarno cleft in the 70S ribosome. The chain is Small ribosomal subunit protein uS11 from Prosthecochloris aestuarii (strain DSM 271 / SK 413).